The following is a 776-amino-acid chain: Ecdysone receptor (776 aa).

Positions 1 to 290 (MYRLNIVSTN…GPTPRQQEEL (290 aa)) are modulating. The disordered stretch occupies residues 199–283 (NEEWISSPSP…DAKKQKKGPT (85 aa)). Over residues 204–213 (SSPSPGSVPG) the composition is skewed to low complexity. Composition is skewed to polar residues over residues 227 to 245 (TTYT…STGS) and 261 to 270 (SPSSSLNGYT). Residues 288-363 (EELCLVCGDR…VGMRPECVVP (76 aa)) constitute a DNA-binding region (nuclear receptor). NR C4-type zinc fingers lie at residues 291-311 (CLVC…CEGC) and 327-346 (CKFG…CQEC). Positions 437–673 (NQMAVIYKLI…FLEEIWDVQD (237 aa)) constitute an NR LBD domain. Positions 679–688 (QAQMHSHGTQ) are enriched in polar residues. The tract at residues 679-776 (QAQMHSHGTQ…VPGLGMLDQV (98 aa)) is disordered. A compositionally biased stretch (low complexity) spans 689-745 (SSSSSSSSSSSSSNGSSNGNSSSNSNSSQHGPHPHPHGQQLTPNQQQHQQQHSQLQQ).

It belongs to the nuclear hormone receptor family. NR1 subfamily. As to quaternary structure, heterodimer of USP and ECR. Only the heterodimer is capable of high-affinity binding to ecdysone. As to expression, a peak level expression is seen in the fat body of previtellogenic female mosquitos at one and two days after eclosion, levels fall three-fold at three days posteclosion.

The protein resides in the nucleus. Functionally, receptor for ecdysone. Binds to ecdysone response elements (ECRES). The chain is Ecdysone receptor (EcR) from Aedes aegypti (Yellowfever mosquito).